Consider the following 382-residue polypeptide: Pectinesterase (382 aa).

Positions 1-16 (MKIIVLLLLAVVLASA) are cleaved as a signal peptide. A disulfide bridge connects residues C153 and C164. N179 carries N-linked (GlcNAc...) asparagine glycosylation. Q193 serves as a coordination point for substrate. D216 serves as the catalytic Proton donor. The active-site Nucleophile is D242. Residues R306 and W308 each coordinate substrate. N-linked (GlcNAc...) asparagine glycans are attached at residues N340 and N376.

Belongs to the pectinesterase family. In terms of tissue distribution, expressed throughout the midgut with particularly strong expression in the ventriculus.

It is found in the secreted. The catalysed reaction is [(1-&gt;4)-alpha-D-galacturonosyl methyl ester](n) + n H2O = [(1-&gt;4)-alpha-D-galacturonosyl](n) + n methanol + n H(+). Its pathway is glycan metabolism; pectin degradation; 2-dehydro-3-deoxy-D-gluconate from pectin: step 1/5. Pectinesterase which probably plays an important role in the digestion of plant cell walls. The protein is Pectinesterase of Sitophilus oryzae (Rice weevil).